The primary structure comprises 199 residues: MAEPRYKADIGGGSLKLPESRIIAGLLLEGVTEDQWRHAIEVENVLQRRSPGTAKRQSSLMRNRLETMGPELWQMVRDGSTQVAIQAVFAAAIKHSTLLGDFLDLVVRDQFRMFRPDLPRKMWDQYLEQCRNRDPLMPVWQDSTANKLADCVYRILVEVGYITDSKTYRLKSVRISGEVMSYLRENNEQYVIRCIQVSI.

This sequence belongs to the BrxA family.

BREX systems (bacteriophage exclusion) provide immunity against bacteriophage. Part of a type 1 BREX system which protects against dsDNA phage. This system allows phage adsorption but prevents phage DNA replication, without degradation of the phage DNA. Methylation of bacterial DNA by PglX guides self/non-self discrimination. This is BREX protein BrxA from Paramagnetospirillum magneticum (strain ATCC 700264 / AMB-1) (Magnetospirillum magneticum).